Reading from the N-terminus, the 356-residue chain is Probable D-xylulose reductase A (356 aa).

Zn(2+) contacts are provided by C45, H70, and E71. An NAD(+)-binding site is contributed by 180–185; sequence GAGPVG.

It belongs to the zinc-containing alcohol dehydrogenase family. Zn(2+) is required as a cofactor.

The catalysed reaction is xylitol + NAD(+) = D-xylulose + NADH + H(+). The protein operates within carbohydrate degradation; L-arabinose degradation via L-arabinitol; D-xylulose 5-phosphate from L-arabinose (fungal route): step 4/5. Its function is as follows. Xylitol dehydrogenase which catalyzes the conversion of xylitol to D-xylulose. Xylose is a major component of hemicelluloses such as xylan. Most fungi utilize D-xylose via three enzymatic reactions, xylose reductase (XR), xylitol dehydrogenase (XDH), and xylulokinase, to form xylulose 5-phosphate, which enters pentose phosphate pathway. The polypeptide is Probable D-xylulose reductase A (xdhA) (Arthroderma otae (strain ATCC MYA-4605 / CBS 113480) (Microsporum canis)).